A 193-amino-acid chain; its full sequence is MYKKIIFSEFNSASKILKNFLEDKKQIENIQKAAILIAQSFKNEKKVISCGNGGSHCDAVHFSEELTSVYRKKRSGYPAISISDSSYISAVGNDFGYDQIFSRFIQSVGHLGDILLAISTSGNSLNIVRAIEEAKKKKMKVIVLTGNNAGKIKNLSDIEICIPHCGYSDRIQEMHIKIIHILILIIEKEMQKN.

The region spanning 37–193 is the SIS domain; sequence IAQSFKNEKK…LIIEKEMQKN (157 aa). 52–54 serves as a coordination point for substrate; that stretch reads NGG. Zn(2+) is bound by residues His-61 and Glu-65. Substrate-binding positions include Glu-65, 93 to 94, 119 to 121, Ser-124, and Gln-172; these read ND and STS. 2 residues coordinate Zn(2+): Gln-172 and His-180.

This sequence belongs to the SIS family. GmhA subfamily. Homotetramer. Requires Zn(2+) as cofactor.

The protein localises to the cytoplasm. It carries out the reaction 2 D-sedoheptulose 7-phosphate = D-glycero-alpha-D-manno-heptose 7-phosphate + D-glycero-beta-D-manno-heptose 7-phosphate. The protein operates within carbohydrate biosynthesis; D-glycero-D-manno-heptose 7-phosphate biosynthesis; D-glycero-alpha-D-manno-heptose 7-phosphate and D-glycero-beta-D-manno-heptose 7-phosphate from sedoheptulose 7-phosphate: step 1/1. Its function is as follows. Catalyzes the isomerization of sedoheptulose 7-phosphate in D-glycero-D-manno-heptose 7-phosphate. This Buchnera aphidicola subsp. Acyrthosiphon pisum (strain 5A) protein is Phosphoheptose isomerase.